The chain runs to 321 residues: MLFATLEHILTHISFSTISIVITIHLITLLVRELRGLRDSSEKGMIATFFSITGFLVSRWVSSGHFPLSNLYESLIFLSWTLYILHTIPKIQNSKNDLSTITTPSTILTQGFATSGLLTEMHQSTILVPALQSQWLMMHVSMMLLSYATLLCGSLLSAALLIIRFRNSFDFFSLKKNVLRKTFFFSEIEYLYAKRSALKNTSFPVFPNYYKYQLTERLDSWSYRVISLGFTLLTVGILCGAVWANEAWGSYWNWDPKETWAFITWTIFAIYLHSRTNPNWKGTNSALVASIGFLIIWICYFGINLLGIGLHSYGSFTLPSK.

The next 7 helical transmembrane spans lie at 9–29, 44–64, 68–88, 143–163, 225–245, 259–273, and 288–308; these read ILTH…LITL, GMIA…VSSG, LSNL…LHTI, MLLS…LLII, VISL…VWAN, TWAF…IYLH, and VASI…LLGI.

It belongs to the CcmF/CycK/Ccl1/NrfE/CcsA family. In terms of assembly, may interact with Ccs1.

The protein localises to the plastid. Its subcellular location is the chloroplast thylakoid membrane. Its function is as follows. Required during biogenesis of c-type cytochromes (cytochrome c6 and cytochrome f) at the step of heme attachment. This Saccharum hybrid (Sugarcane) protein is Cytochrome c biogenesis protein CcsA.